The primary structure comprises 283 residues: NAD kinase (283 aa).

Catalysis depends on aspartate 66, which acts as the Proton acceptor. NAD(+) contacts are provided by residues 66–67 (DG), 140–141 (ND), arginine 151, lysine 168, aspartate 170, 181–186 (TGYCLS), and glutamine 240.

This sequence belongs to the NAD kinase family. A divalent metal cation serves as cofactor.

It localises to the cytoplasm. It carries out the reaction NAD(+) + ATP = ADP + NADP(+) + H(+). In terms of biological role, involved in the regulation of the intracellular balance of NAD and NADP, and is a key enzyme in the biosynthesis of NADP. Catalyzes specifically the phosphorylation on 2'-hydroxyl of the adenosine moiety of NAD to yield NADP. The protein is NAD kinase of Geobacter metallireducens (strain ATCC 53774 / DSM 7210 / GS-15).